A 261-amino-acid chain; its full sequence is Triosephosphate isomerase (261 aa).

D-glyceraldehyde 3-phosphate-binding residues include Asn-11 and Lys-13. The Electrophile role is filled by His-102. Residue Glu-174 is the Proton acceptor of the active site. D-glyceraldehyde 3-phosphate contacts are provided by Gly-180, Leu-239, and Gly-241.

This sequence belongs to the triosephosphate isomerase family. In terms of assembly, homodimer.

The enzyme catalyses D-glyceraldehyde 3-phosphate = dihydroxyacetone phosphate. The protein operates within carbohydrate biosynthesis; gluconeogenesis. It functions in the pathway carbohydrate degradation; glycolysis; D-glyceraldehyde 3-phosphate from glycerone phosphate: step 1/1. In terms of biological role, catalyzes the interconversion of glyceraldehyde 3-phosphate and dihydroxyacetone phosphate in the glycolytic and gluconeogenic pathways. This is Triosephosphate isomerase from Entamoeba histolytica (strain ATCC 30459 / HM-1:IMSS / ABRM).